Here is a 284-residue protein sequence, read N- to C-terminus: 4-diphosphocytidyl-2-C-methyl-D-erythritol kinase (284 aa).

The active site involves lysine 14. ATP is bound at residue 98-108 (PMGGGLGGGSS). Aspartate 140 is an active-site residue.

This sequence belongs to the GHMP kinase family. IspE subfamily.

The catalysed reaction is 4-CDP-2-C-methyl-D-erythritol + ATP = 4-CDP-2-C-methyl-D-erythritol 2-phosphate + ADP + H(+). It participates in isoprenoid biosynthesis; isopentenyl diphosphate biosynthesis via DXP pathway; isopentenyl diphosphate from 1-deoxy-D-xylulose 5-phosphate: step 3/6. In terms of biological role, catalyzes the phosphorylation of the position 2 hydroxy group of 4-diphosphocytidyl-2C-methyl-D-erythritol. The sequence is that of 4-diphosphocytidyl-2-C-methyl-D-erythritol kinase from Shewanella pealeana (strain ATCC 700345 / ANG-SQ1).